The sequence spans 397 residues: LL-diaminopimelate aminotransferase (397 aa).

2 residues coordinate substrate: Tyr14 and Gly41. Pyridoxal 5'-phosphate contacts are provided by residues Tyr71, 104–105 (AK), Tyr128, Asn174, Tyr205, and 233–235 (SFS). The substrate site is built by Lys105, Tyr128, and Asn174. Lys236 is subject to N6-(pyridoxal phosphate)lysine. Positions 244 and 275 each coordinate pyridoxal 5'-phosphate. Substrate is bound by residues Asn275 and Arg368.

Belongs to the class-I pyridoxal-phosphate-dependent aminotransferase family. LL-diaminopimelate aminotransferase subfamily. As to quaternary structure, homodimer. Pyridoxal 5'-phosphate serves as cofactor.

It catalyses the reaction (2S,6S)-2,6-diaminopimelate + 2-oxoglutarate = (S)-2,3,4,5-tetrahydrodipicolinate + L-glutamate + H2O + H(+). It participates in amino-acid biosynthesis; L-lysine biosynthesis via DAP pathway; LL-2,6-diaminopimelate from (S)-tetrahydrodipicolinate (aminotransferase route): step 1/1. In terms of biological role, involved in the synthesis of meso-diaminopimelate (m-DAP or DL-DAP), required for both lysine and peptidoglycan biosynthesis. Catalyzes the direct conversion of tetrahydrodipicolinate to LL-diaminopimelate. The protein is LL-diaminopimelate aminotransferase of Chlamydia pneumoniae (Chlamydophila pneumoniae).